A 169-amino-acid polypeptide reads, in one-letter code: MGSKNPTKIEGARRAFEQYFDDVEIVGVEVSTSAPPQPFDAETVRGAIERAKKAYSPDFDFSVGIEAGLFRSECTITGYLDFQVAAVYDGERCTIGFGPGFEYPKLVVEEVLKGKEVGEVMEKVSGIKNLGKKVGAVHYLSKGAISRTDLSRISVTMALIPFINREMYL.

Asp-58 contributes to the Mg(2+) binding site.

Belongs to the YjjX NTPase family. Homodimer. Mg(2+) is required as a cofactor. The cofactor is Mn(2+).

It catalyses the reaction XTP + H2O = XDP + phosphate + H(+). The catalysed reaction is ITP + H2O = IDP + phosphate + H(+). Its function is as follows. Phosphatase that hydrolyzes non-canonical purine nucleotides such as XTP and ITP to their respective diphosphate derivatives. Probably excludes non-canonical purines from DNA/RNA precursor pool, thus preventing their incorporation into DNA/RNA and avoiding chromosomal lesions. This chain is Probable inosine/xanthosine triphosphatase, found in Archaeoglobus fulgidus (strain ATCC 49558 / DSM 4304 / JCM 9628 / NBRC 100126 / VC-16).